The following is an 81-amino-acid chain: Small ribosomal subunit protein bS16 (81 aa).

It belongs to the bacterial ribosomal protein bS16 family.

This chain is Small ribosomal subunit protein bS16, found in Caldicellulosiruptor saccharolyticus (strain ATCC 43494 / DSM 8903 / Tp8T 6331).